The primary structure comprises 578 residues: Acyl-coenzyme A synthetase ACSM5, mitochondrial (578 aa).

The transit peptide at 1–22 (MRLWLRGLACQALRSSWGVCRI) directs the protein to the mitochondrion. Lysine 96 carries the post-translational modification N6-acetyllysine; alternate. Lysine 96 carries the post-translational modification N6-succinyllysine; alternate. Lysine 151 is modified (N6-acetyllysine). Position 229-237 (229-237 (TSGTTGAPK)) interacts with ATP. An N6-acetyllysine; alternate modification is found at lysine 302. Lysine 302 is modified (N6-succinyllysine; alternate). The residue at position 335 (lysine 335) is an N6-acetyllysine. Residues 367–372 (EGYGQS), aspartate 454, arginine 469, and lysine 565 each bind ATP.

This sequence belongs to the ATP-dependent AMP-binding enzyme family. The cofactor is Mg(2+). Mn(2+) is required as a cofactor.

The protein resides in the mitochondrion matrix. The catalysed reaction is a medium-chain fatty acid + ATP + CoA = a medium-chain fatty acyl-CoA + AMP + diphosphate. Functionally, catalyzes the activation of fatty acids by CoA to produce an acyl-CoA, the first step in fatty acid metabolism. In Mus musculus (Mouse), this protein is Acyl-coenzyme A synthetase ACSM5, mitochondrial (Acsm5).